The following is a 103-amino-acid chain: Turripeptide OL55-like (103 aa).

Contains 8 disulfide bonds. Expressed by the venom duct.

It is found in the secreted. Its function is as follows. Acts as a neurotoxin by inhibiting an ion channel. The chain is Turripeptide OL55-like from Lophiotoma albina (Sea snail).